The sequence spans 218 residues: UPF0329 protein ECU10_1860 (218 aa).

This sequence belongs to the UPF0329 family.

This Encephalitozoon cuniculi (strain GB-M1) (Microsporidian parasite) protein is UPF0329 protein ECU10_1860.